A 262-amino-acid chain; its full sequence is 3-methyl-2-oxobutanoate hydroxymethyltransferase (262 aa).

The Mg(2+) site is built by D42 and D81. 3-methyl-2-oxobutanoate-binding positions include 42–43 (DS), D81, and K110. E112 is a Mg(2+) binding site. E179 functions as the Proton acceptor in the catalytic mechanism.

It belongs to the PanB family. As to quaternary structure, homodecamer; pentamer of dimers. The cofactor is Mg(2+).

Its subcellular location is the cytoplasm. The catalysed reaction is 3-methyl-2-oxobutanoate + (6R)-5,10-methylene-5,6,7,8-tetrahydrofolate + H2O = 2-dehydropantoate + (6S)-5,6,7,8-tetrahydrofolate. The protein operates within cofactor biosynthesis; (R)-pantothenate biosynthesis; (R)-pantoate from 3-methyl-2-oxobutanoate: step 1/2. Its function is as follows. Catalyzes the reversible reaction in which hydroxymethyl group from 5,10-methylenetetrahydrofolate is transferred onto alpha-ketoisovalerate to form ketopantoate. The polypeptide is 3-methyl-2-oxobutanoate hydroxymethyltransferase (Methylobacillus flagellatus (strain ATCC 51484 / DSM 6875 / VKM B-1610 / KT)).